The sequence spans 1053 residues: Ubiquitin-like modifier-activating enzyme 6 (1053 aa).

Position 1 is an N-acetylmethionine (methionine 1). Arginine 46 contributes to the ATP binding site. Threonine 54 is subject to Phosphothreonine. Positions 470 and 497 each coordinate ATP. Mg(2+)-binding residues include aspartate 499 and glutamate 502. ATP-binding residues include asparagine 505, arginine 508, glutamine 509, and lysine 521. An N6-acetyllysine modification is found at lysine 544. Valine 545 provides a ligand contact to ATP. Residue aspartate 569 participates in Mg(2+) binding. Asparagine 570 contacts ATP. The active-site Glycyl thioester intermediate is cysteine 625. Lysine 729 bears the N6-acetyllysine mark. Serine 737 is modified (phosphoserine).

It belongs to the ubiquitin-activating E1 family. In terms of assembly, forms a thioester with UBD in cells stimulated with tumor necrosis factor-alpha (TNFa) and interferon-gamma (IFNg).

It catalyses the reaction ATP + ubiquitin + [E1 ubiquitin-activating enzyme]-L-cysteine = AMP + diphosphate + S-ubiquitinyl-[E1 ubiquitin-activating enzyme]-L-cysteine.. The protein operates within protein modification; protein ubiquitination. In terms of biological role, activates ubiquitin by first adenylating its C-terminal glycine residue with ATP, and thereafter linking this residue to the side chain of a cysteine residue in E1, yielding a ubiquitin-E1 thioester and free AMP. Specific for ubiquitin, does not activate ubiquitin-like peptides. Also activates UBD/FAT10 conjugation via adenylation of its C-terminal glycine. Differs from UBE1 in its specificity for substrate E2 charging. Does not charge cell cycle E2s, such as CDC34. Essential for embryonic development. This is Ubiquitin-like modifier-activating enzyme 6 (Uba6) from Mus musculus (Mouse).